Here is a 125-residue protein sequence, read N- to C-terminus: Small ribosomal subunit protein uS13 (125 aa).

It belongs to the universal ribosomal protein uS13 family. In terms of assembly, part of the 30S ribosomal subunit. Forms a loose heterodimer with protein S19. Forms two bridges to the 50S subunit in the 70S ribosome.

Functionally, located at the top of the head of the 30S subunit, it contacts several helices of the 16S rRNA. In the 70S ribosome it contacts the 23S rRNA (bridge B1a) and protein L5 of the 50S subunit (bridge B1b), connecting the 2 subunits; these bridges are implicated in subunit movement. Contacts the tRNAs in the A and P-sites. In Gluconobacter oxydans (strain 621H) (Gluconobacter suboxydans), this protein is Small ribosomal subunit protein uS13.